The primary structure comprises 143 residues: Large ribosomal subunit protein uL15 (143 aa).

The disordered stretch occupies residues 1 to 56 (MELNSIKPAEGSKHAKRRVGRGIGSGLGKTAGRGHKGQKSRSGGYHKVGFEGGQMP). Positions 21-31 (RGIGSGLGKTA) are enriched in gly residues.

Belongs to the universal ribosomal protein uL15 family. In terms of assembly, part of the 50S ribosomal subunit.

Binds to the 23S rRNA. The polypeptide is Large ribosomal subunit protein uL15 (Delftia acidovorans (strain DSM 14801 / SPH-1)).